Here is a 340-residue protein sequence, read N- to C-terminus: Phosphate acyltransferase (340 aa).

It belongs to the PlsX family. Homodimer. Probably interacts with PlsY.

The protein resides in the cytoplasm. The enzyme catalyses a fatty acyl-[ACP] + phosphate = an acyl phosphate + holo-[ACP]. It participates in lipid metabolism; phospholipid metabolism. Its function is as follows. Catalyzes the reversible formation of acyl-phosphate (acyl-PO(4)) from acyl-[acyl-carrier-protein] (acyl-ACP). This enzyme utilizes acyl-ACP as fatty acyl donor, but not acyl-CoA. This is Phosphate acyltransferase from Nitrosococcus oceani (strain ATCC 19707 / BCRC 17464 / JCM 30415 / NCIMB 11848 / C-107).